The primary structure comprises 319 residues: Pantothenate kinase (319 aa).

97–104 (GSVAVGKS) contacts ATP.

It belongs to the prokaryotic pantothenate kinase family.

The protein localises to the cytoplasm. It catalyses the reaction (R)-pantothenate + ATP = (R)-4'-phosphopantothenate + ADP + H(+). It participates in cofactor biosynthesis; coenzyme A biosynthesis; CoA from (R)-pantothenate: step 1/5. The protein is Pantothenate kinase of Mesorhizobium japonicum (strain LMG 29417 / CECT 9101 / MAFF 303099) (Mesorhizobium loti (strain MAFF 303099)).